We begin with the raw amino-acid sequence, 574 residues long: Ribonuclease Y (574 aa).

A helical membrane pass occupies residues 1–21; that stretch reads MSLLDLVLLLLVLGLGGVLLL. Residues 264 to 327 enclose the KH domain; sequence AVTVVPIPSD…EIARMALEEL (64 aa). The HD domain maps to 390–483; sequence VLKHSIQVAH…VAAADALSAA (94 aa).

It belongs to the RNase Y family.

Its subcellular location is the cell membrane. In terms of biological role, endoribonuclease that initiates mRNA decay. The polypeptide is Ribonuclease Y (Thermus thermophilus (strain ATCC BAA-163 / DSM 7039 / HB27)).